The primary structure comprises 95 residues: Glutamyl-tRNA(Gln) amidotransferase subunit C 1 (95 aa).

The protein belongs to the GatC family. Heterotrimer of A, B and C subunits.

The enzyme catalyses L-glutamyl-tRNA(Gln) + L-glutamine + ATP + H2O = L-glutaminyl-tRNA(Gln) + L-glutamate + ADP + phosphate + H(+). It catalyses the reaction L-aspartyl-tRNA(Asn) + L-glutamine + ATP + H2O = L-asparaginyl-tRNA(Asn) + L-glutamate + ADP + phosphate + 2 H(+). In terms of biological role, allows the formation of correctly charged Asn-tRNA(Asn) or Gln-tRNA(Gln) through the transamidation of misacylated Asp-tRNA(Asn) or Glu-tRNA(Gln) in organisms which lack either or both of asparaginyl-tRNA or glutaminyl-tRNA synthetases. The reaction takes place in the presence of glutamine and ATP through an activated phospho-Asp-tRNA(Asn) or phospho-Glu-tRNA(Gln). The polypeptide is Glutamyl-tRNA(Gln) amidotransferase subunit C 1 (gatC1) (Clostridium acetobutylicum (strain ATCC 824 / DSM 792 / JCM 1419 / IAM 19013 / LMG 5710 / NBRC 13948 / NRRL B-527 / VKM B-1787 / 2291 / W)).